The sequence spans 790 residues: Alpha,alpha-trehalose-phosphate synthase [UDP-forming] B (790 aa).

The protein in the N-terminal section; belongs to the glycosyltransferase 20 family. It in the C-terminal section; belongs to the trehalose phosphatase family.

It catalyses the reaction D-glucose 6-phosphate + UDP-alpha-D-glucose = alpha,alpha-trehalose 6-phosphate + UDP + H(+). In terms of biological role, synthesizes trehalose 6-phosphate, the precursor for the production of trehalose, the main carbohydrate storage reserve of the dormant spore. Trehalose accumulates in both prestalk and prespore cells and then is rapidly metabolized during terminal differentiation of stalk cells, while being stored in spores, where it serves as the principal energy and carbon source for germination. The polypeptide is Alpha,alpha-trehalose-phosphate synthase [UDP-forming] B (tpsB) (Dictyostelium discoideum (Social amoeba)).